Here is a 228-residue protein sequence, read N- to C-terminus: Ribosomal RNA large subunit methyltransferase E (228 aa).

Residues Gly-76, Trp-78, Asp-99, Asp-115, and Asp-139 each coordinate S-adenosyl-L-methionine. Residue Lys-179 is the Proton acceptor of the active site.

It belongs to the class I-like SAM-binding methyltransferase superfamily. RNA methyltransferase RlmE family.

Its subcellular location is the cytoplasm. The enzyme catalyses uridine(2552) in 23S rRNA + S-adenosyl-L-methionine = 2'-O-methyluridine(2552) in 23S rRNA + S-adenosyl-L-homocysteine + H(+). Specifically methylates the uridine in position 2552 of 23S rRNA at the 2'-O position of the ribose in the fully assembled 50S ribosomal subunit. The polypeptide is Ribosomal RNA large subunit methyltransferase E (Nitrobacter hamburgensis (strain DSM 10229 / NCIMB 13809 / X14)).